Reading from the N-terminus, the 567-residue chain is Potassium-transporting ATPase potassium-binding subunit (567 aa).

The next 12 membrane-spanning stretches (helical) occupy residues 11–31 (LYLL…AALL), 67–87 (AAAI…LQRW), 136–156 (GLAV…VALV), 179–199 (LWLL…QGVV), 255–275 (FSNW…VVMF), 286–306 (VVLL…VYLA), 333–353 (FGVL…CGAV), 363–383 (LGGG…GGVG), 385–405 (GLYG…LMIG), 422–442 (LVSV…AIAV), 489–509 (LMLA…VLAL), and 532–552 (LFVV…YIPA).

This sequence belongs to the KdpA family. In terms of assembly, the system is composed of three essential subunits: KdpA, KdpB and KdpC.

The protein resides in the cell inner membrane. Its function is as follows. Part of the high-affinity ATP-driven potassium transport (or Kdp) system, which catalyzes the hydrolysis of ATP coupled with the electrogenic transport of potassium into the cytoplasm. This subunit binds the periplasmic potassium ions and delivers the ions to the membrane domain of KdpB through an intramembrane tunnel. This Laribacter hongkongensis (strain HLHK9) protein is Potassium-transporting ATPase potassium-binding subunit.